Here is a 152-residue protein sequence, read N- to C-terminus: Transcriptional repressor NrdR (152 aa).

A zinc finger lies at 3–34 (CPFCNHGELKVIDSRNSPEANAIKRRRECLRC). Residues 48-138 (IQVLKRDGRY…VYRRFRDVGE (91 aa)) form the ATP-cone domain.

The protein belongs to the NrdR family. Requires Zn(2+) as cofactor.

Its function is as follows. Negatively regulates transcription of bacterial ribonucleotide reductase nrd genes and operons by binding to NrdR-boxes. This Chlamydia muridarum (strain MoPn / Nigg) protein is Transcriptional repressor NrdR.